The chain runs to 783 residues: Rabenosyn-5 (783 aa).

N-acetylalanine is present on Ala-2. Ser-3 bears the Phosphoserine mark. The segment at 14–37 (FLCPLCLKDLQSFYQLQSHYEEEH) adopts a C2H2-type zinc-finger fold. The necessary for the correct targeting to endosomes stretch occupies residues 99-262 (RSHLSDFKKH…HCKDKLLKRE (164 aa)). The FYVE-type zinc-finger motif lies at 156–259 (DQDVPFCPDC…CCTHCKDKLL (104 aa)). Residues Cys-162, Cys-165, Cys-178, Cys-181, Cys-186, and Cys-189 each contribute to the Zn(2+) site. The span at 206–223 (KDSLSTHTSPSQSPNSVH) shows a compositional bias: polar residues. The interval 206 to 240 (KDSLSTHTSPSQSPNSVHGSRRGSISSMSSVSSVL) is disordered. A phosphoserine mark is found at Ser-214, Ser-218, Ser-225, and Ser-229. Residues 227-239 (RGSISSMSSVSSV) show a composition bias toward low complexity. Zn(2+)-binding residues include Cys-251 and Cys-254. Positions 263 to 499 (QQMDEKEHTP…QLQDEYDQQQ (237 aa)) are necessary for interaction with RAB4A. A necessary for interaction with EHD1 region spans residues 263 to 783 (QQMDEKEHTP…TLAKQKGAPN (521 aa)). 2 coiled-coil regions span residues 377-412 (TKEQ…KLEE) and 471-531 (QAKA…ELER). Basic and acidic residues-rich tracts occupy residues 387–399 (KRKQ…RTVE) and 405–414 (ESRRKLEERQ). The interval 387–433 (KRKQDLEQKRTVERQAALESRRKLEERQSGLASHTANGDVRSLRGIP) is disordered. Residues 495 to 514 (YDQQQTEKAIELSRKQAEEE) form the UIM domain. Disordered stretches follow at residues 569–638 (SYSL…SPTE) and 663–733 (FEED…EEHI). Composition is skewed to polar residues over residues 571–584 (SLDQ…SSTA) and 610–623 (TLPQ…SDKA). The interval 627-783 (PFDEDDLSSP…TLAKQKGAPN (157 aa)) is necessary for interaction with RAB5A. A compositionally biased stretch (acidic residues) spans 663-673 (FEEDAEEEEVA). Ser-686 bears the Phosphoserine mark. The segment covering 721 to 733 (VDSDSGMEAEEHI) has biased composition (acidic residues).

Interacts with EHD1, RAB4A, RAB5A, RAB22A, RAB24 and VPS45. Binds simultaneously to RAB4A and RAB5A in vitro. Interacts with RAB4A and RAB5A that has been activated by GTP binding.

Its subcellular location is the cell membrane. It localises to the early endosome membrane. Functionally, rab4/Rab5 effector protein acting in early endocytic membrane fusion and membrane trafficking of recycling endosomes. Required for endosome fusion either homotypically or with clathrin coated vesicles. Plays a role in the lysosomal trafficking of CTSD/cathepsin D from the Golgi to lysosomes. Also promotes the recycling of transferrin directly from early endosomes to the plasma membrane. Binds phospholipid vesicles containing phosphatidylinositol 3-phosphate (PtdInsP3). Plays a role in the recycling of transferrin receptor to the plasma membrane. This chain is Rabenosyn-5, found in Mus musculus (Mouse).